The following is a 629-amino-acid chain: tRNA uridine 5-carboxymethylaminomethyl modification enzyme MnmG (629 aa).

13–18 (GGGHAG) provides a ligand contact to FAD. 273–287 (GPRYCPSIEDKINRF) contacts NAD(+).

Belongs to the MnmG family. As to quaternary structure, homodimer. Heterotetramer of two MnmE and two MnmG subunits. FAD serves as cofactor.

Its subcellular location is the cytoplasm. Functionally, NAD-binding protein involved in the addition of a carboxymethylaminomethyl (cmnm) group at the wobble position (U34) of certain tRNAs, forming tRNA-cmnm(5)s(2)U34. The chain is tRNA uridine 5-carboxymethylaminomethyl modification enzyme MnmG from Shewanella piezotolerans (strain WP3 / JCM 13877).